Here is a 350-residue protein sequence, read N- to C-terminus: Small ribosomal subunit biogenesis GTPase RsgA (350 aa).

The segment covering 1–17 (MSKNKLSKGQQRRVQAN) has biased composition (polar residues). The tract at residues 1 to 35 (MSKNKLSKGQQRRVQANHQRRLRTDRKPELDDSQL) is disordered. The CP-type G domain occupies 103–273 (TSVLTRPDLY…VIDSPGVREF (171 aa)). Residues 159-162 (NKID) and 213-221 (GQSGVGKSS) contribute to the GTP site. Zn(2+)-binding residues include cysteine 297, cysteine 302, histidine 304, and cysteine 310.

This sequence belongs to the TRAFAC class YlqF/YawG GTPase family. RsgA subfamily. Monomer. Associates with 30S ribosomal subunit, binds 16S rRNA. Zn(2+) is required as a cofactor.

The protein localises to the cytoplasm. One of several proteins that assist in the late maturation steps of the functional core of the 30S ribosomal subunit. Helps release RbfA from mature subunits. May play a role in the assembly of ribosomal proteins into the subunit. Circularly permuted GTPase that catalyzes slow GTP hydrolysis, GTPase activity is stimulated by the 30S ribosomal subunit. This Yersinia pseudotuberculosis serotype O:1b (strain IP 31758) protein is Small ribosomal subunit biogenesis GTPase RsgA.